Reading from the N-terminus, the 410-residue chain is Regulator of microtubule dynamics protein 2 (410 aa).

Residues 10 to 27 (ILGIVVGTAGISLLLLWY) traverse the membrane as a helical segment. A coiled-coil region spans residues 71–109 (RQLQILEKLNELLTHMEELKEEIRVLKEAIPKLEEYIQG). Ser-121 carries the post-translational modification Phosphoserine. The span at 122 to 131 (PQHRARKRRL) shows a compositional bias: basic residues. The segment at 122-153 (PQHRARKRRLATVQSSATSNSSEEAESEGGYV) is disordered. The residue at position 139 (Thr-139) is a Phosphothreonine. Tyr-152 is modified (phosphotyrosine). Residues Thr-154 and Thr-157 each carry the phosphothreonine modification.

Belongs to the RMDN family. In terms of assembly, interacts with microtubules.

It is found in the membrane. It localises to the cytoplasm. The protein localises to the cytoskeleton. Its subcellular location is the spindle. The protein resides in the spindle pole. The protein is Regulator of microtubule dynamics protein 2 (RMDN2) of Bos taurus (Bovine).